Consider the following 775-residue polypeptide: 1,4-alpha-glucan branching enzyme GlgB (775 aa).

D431 acts as the Nucleophile in catalysis. Residue E484 is the Proton donor of the active site.

The protein belongs to the glycosyl hydrolase 13 family. GlgB subfamily. Monomer.

It catalyses the reaction Transfers a segment of a (1-&gt;4)-alpha-D-glucan chain to a primary hydroxy group in a similar glucan chain.. Its pathway is glycan biosynthesis; glycogen biosynthesis. Functionally, catalyzes the formation of the alpha-1,6-glucosidic linkages in glycogen by scission of a 1,4-alpha-linked oligosaccharide from growing alpha-1,4-glucan chains and the subsequent attachment of the oligosaccharide to the alpha-1,6 position. This Parasynechococcus marenigrum (strain WH8102) protein is 1,4-alpha-glucan branching enzyme GlgB.